Consider the following 269-residue polypeptide: 4-hydroxy-tetrahydrodipicolinate reductase (269 aa).

NAD(+) is bound at residue 9–14 (GVAGRM). Arginine 36 provides a ligand contact to NADP(+). Residues 99–101 (GTT) and 123–126 (APNM) contribute to the NAD(+) site. The Proton donor/acceptor role is filled by histidine 156. Histidine 157 serves as a coordination point for (S)-2,3,4,5-tetrahydrodipicolinate. Lysine 160 acts as the Proton donor in catalysis. 166-167 (GT) provides a ligand contact to (S)-2,3,4,5-tetrahydrodipicolinate.

This sequence belongs to the DapB family.

Its subcellular location is the cytoplasm. The enzyme catalyses (S)-2,3,4,5-tetrahydrodipicolinate + NAD(+) + H2O = (2S,4S)-4-hydroxy-2,3,4,5-tetrahydrodipicolinate + NADH + H(+). The catalysed reaction is (S)-2,3,4,5-tetrahydrodipicolinate + NADP(+) + H2O = (2S,4S)-4-hydroxy-2,3,4,5-tetrahydrodipicolinate + NADPH + H(+). It functions in the pathway amino-acid biosynthesis; L-lysine biosynthesis via DAP pathway; (S)-tetrahydrodipicolinate from L-aspartate: step 4/4. Its function is as follows. Catalyzes the conversion of 4-hydroxy-tetrahydrodipicolinate (HTPA) to tetrahydrodipicolinate. The polypeptide is 4-hydroxy-tetrahydrodipicolinate reductase (Methylococcus capsulatus (strain ATCC 33009 / NCIMB 11132 / Bath)).